A 150-amino-acid chain; its full sequence is Seminal ribonuclease (150 aa).

A signal peptide spans 1-26; it reads MALKSLVVLPLLVLVLLLVRVQPSLG. The substrate site is built by lysine 33 and arginine 36. Residue histidine 38 is the Proton acceptor of the active site. 4 disulfides stabilise this stretch: cysteine 52-cysteine 110, cysteine 66-cysteine 121, cysteine 84-cysteine 136, and cysteine 91-cysteine 98. Substrate-binding positions include 67 to 71 and lysine 92; that span reads KPVNT. Asparagine 93 carries the deamidated asparagine; by deterioration modification. Substrate is bound at residue arginine 111. The Proton donor role is filled by histidine 145.

Belongs to the pancreatic ribonuclease family. As to quaternary structure, homodimer; disulfide-linked. In terms of tissue distribution, seminal plasma. Can reach 3% of the protein content of this fluid.

It localises to the secreted. The enzyme catalyses an [RNA] containing cytidine + H2O = an [RNA]-3'-cytidine-3'-phosphate + a 5'-hydroxy-ribonucleotide-3'-[RNA].. The catalysed reaction is an [RNA] containing uridine + H2O = an [RNA]-3'-uridine-3'-phosphate + a 5'-hydroxy-ribonucleotide-3'-[RNA].. With respect to regulation, allosteric regulation by both substrate and reaction products. This enzyme hydrolyzes both single- and double-stranded RNA. The sequence is that of Seminal ribonuclease (SRN) from Bos taurus (Bovine).